The chain runs to 523 residues: Peptidyl-prolyl cis-trans isomerase 4 (523 aa).

The region spanning Lys38–Arg111 is the U-box domain. One can recognise a PPIase cyclophilin-type domain in the interval Lys278–Val433.

This sequence belongs to the cyclophilin-type PPIase family. PPIL2 subfamily. Interacts with mep-1. In terms of tissue distribution, exclusively in the larval body wall striated muscle cells.

It localises to the nucleus. The enzyme catalyses [protein]-peptidylproline (omega=180) = [protein]-peptidylproline (omega=0). The catalysed reaction is S-ubiquitinyl-[E2 ubiquitin-conjugating enzyme]-L-cysteine + [acceptor protein]-L-lysine = [E2 ubiquitin-conjugating enzyme]-L-cysteine + N(6)-ubiquitinyl-[acceptor protein]-L-lysine.. Its pathway is protein modification; protein ubiquitination. Its function is as follows. May catalyze the cis-trans isomerization of proline imidic peptide bonds in oligopeptides thereby assisting the folding of proteins. May also function as a chaperone, playing a role in intracellular transport of proteins. May also have a protein ubiquitin ligase activity acting as an E3 ubiquitin protein ligase or as a ubiquitin-ubiquitin ligase promoting elongation of ubiquitin chains on proteins. Influences the hermaphrodite switch from spermatogenesis to oogenesis. Required for body wall muscle cell development. This Caenorhabditis elegans protein is Peptidyl-prolyl cis-trans isomerase 4 (cyn-4).